A 548-amino-acid chain; its full sequence is CTP synthase (548 aa).

The interval 1-265 (MTRYIFVTGG…DDIICDKLRI (265 aa)) is amidoligase domain. S13 is a binding site for CTP. S13 lines the UTP pocket. ATP-binding positions include 14–19 (SLGKGI) and D71. Mg(2+) contacts are provided by D71 and E139. CTP is bound by residues 146-148 (DIE), 186-191 (KTKPTQ), and K222. UTP-binding positions include 186–191 (KTKPTQ) and K222. Residues 290-541 (NIAMVGKYME…VNAALAYKAA (252 aa)) form the Glutamine amidotransferase type-1 domain. G351 contacts L-glutamine. The active-site Nucleophile; for glutamine hydrolysis is the C378. Residues 379-382 (LGMQ), E402, and R469 each bind L-glutamine. Residues H514 and E516 contribute to the active site.

This sequence belongs to the CTP synthase family. Homotetramer.

The catalysed reaction is UTP + L-glutamine + ATP + H2O = CTP + L-glutamate + ADP + phosphate + 2 H(+). The enzyme catalyses L-glutamine + H2O = L-glutamate + NH4(+). It catalyses the reaction UTP + NH4(+) + ATP = CTP + ADP + phosphate + 2 H(+). It functions in the pathway pyrimidine metabolism; CTP biosynthesis via de novo pathway; CTP from UDP: step 2/2. Its activity is regulated as follows. Allosterically activated by GTP, when glutamine is the substrate; GTP has no effect on the reaction when ammonia is the substrate. The allosteric effector GTP functions by stabilizing the protein conformation that binds the tetrahedral intermediate(s) formed during glutamine hydrolysis. Inhibited by the product CTP, via allosteric rather than competitive inhibition. In terms of biological role, catalyzes the ATP-dependent amination of UTP to CTP with either L-glutamine or ammonia as the source of nitrogen. Regulates intracellular CTP levels through interactions with the four ribonucleotide triphosphates. The chain is CTP synthase from Chromohalobacter salexigens (strain ATCC BAA-138 / DSM 3043 / CIP 106854 / NCIMB 13768 / 1H11).